A 920-amino-acid polypeptide reads, in one-letter code: Plasma membrane ATPase (920 aa).

Positions 1–77 are disordered; sequence MADHSASGAP…TPGGGRVVPE (77 aa). Residues 1–115 are Cytoplasmic-facing; sequence MADHSASGAP…KEEKENHFLK (115 aa). The segment covering 38–51 has biased composition (acidic residues); sequence EDDEDEDIDALIED. The helical transmembrane segment at 116-138 threads the bilayer; that stretch reads FLGFFVGPIQFVMEGAAVLAAGL. Topologically, residues 139 to 140 are extracellular; it reads ED. Residues 141 to 160 form a helical membrane-spanning segment; the sequence is WVDFGVICGLLLLNAVVGFV. Over 161-291 the chain is Cytoplasmic; it reads QEFQAGSIVD…GSGHFTEVLN (131 aa). Residues 292–314 form a helical membrane-spanning segment; it reads GIGTILLILVIFTLLIVWVSSFY. Topologically, residues 315-321 are extracellular; the sequence is RSNPIVQ. The chain crosses the membrane as a helical span at residues 322–354; sequence ILEFTLAITIIGVPVGLPAVVTTTMAVGAAYLA. Residues 355–687 lie on the Cytoplasmic side of the membrane; it reads KKKAIVQKLS…LKTSRQIFHR (333 aa). D378 (4-aspartylphosphate intermediate) is an active-site residue. Residues D634 and D638 each contribute to the Mg(2+) site. Residues 688-713 traverse the membrane as a helical segment; sequence MYAYVVYRIALSIHLEIFLGLWIAIL. At 714–720 the chain is on the extracellular side; it reads NRSLNIE. The helical transmembrane segment at 721 to 738 threads the bilayer; it reads LVVFIAIFADVATLAIAY. Topologically, residues 739-754 are cytoplasmic; that stretch reads DNAPYSQTPVKWNLPK. Residues 755–779 form a helical membrane-spanning segment; sequence LWGMSVLLGVVLAVGTWITVTTMYA. The Extracellular portion of the chain corresponds to 780–806; it reads QGENGGIVQNFGNMDEVLFLQISLTEN. The next 2 helical transmembrane spans lie at 807–826 and 827–847; these read WLIF…PSWQ and LSGA…WGWF. Residues 848-853 are Extracellular-facing; the sequence is EHSDTS. Residues 854–878 traverse the membrane as a helical segment; it reads IVAVVRIWIFSFGIFCIMGGVYYIL. At 879–920 the chain is on the cytoplasmic side; it reads QDSVGFDNLMHGKSPKGNQKQRSLEDFVVSLQRVSTQHEKSQ.

The protein belongs to the cation transport ATPase (P-type) (TC 3.A.3) family. Type IIIA subfamily.

It localises to the cell membrane. The catalysed reaction is ATP + H2O + H(+)(in) = ADP + phosphate + 2 H(+)(out). Its function is as follows. The plasma membrane ATPase of plants and fungi is a hydrogen ion pump. The proton gradient it generates drives the active transport of nutrients by H(+)-symport. The resulting external acidification and/or internal alkinization may mediate growth responses. The polypeptide is Plasma membrane ATPase (pma-1) (Neurospora crassa (strain ATCC 24698 / 74-OR23-1A / CBS 708.71 / DSM 1257 / FGSC 987)).